The following is a 238-amino-acid chain: Uridylate kinase (238 aa).

ATP is bound at residue 12-15 (KLSG). G54 is a binding site for UMP. ATP-binding residues include G55 and R59. UMP-binding positions include D74 and 135 to 142 (TGNPFFTT). Residues T162, Y168, and D171 each contribute to the ATP site.

Belongs to the UMP kinase family. Homohexamer.

It localises to the cytoplasm. It carries out the reaction UMP + ATP = UDP + ADP. It participates in pyrimidine metabolism; CTP biosynthesis via de novo pathway; UDP from UMP (UMPK route): step 1/1. With respect to regulation, inhibited by UTP. Catalyzes the reversible phosphorylation of UMP to UDP. This is Uridylate kinase from Janthinobacterium sp. (strain Marseille) (Minibacterium massiliensis).